We begin with the raw amino-acid sequence, 438 residues long: Adenylosuccinate synthetase (438 aa).

GTP-binding positions include G12–K18 and G40–T42. D13 acts as the Proton acceptor in catalysis. Mg(2+)-binding residues include D13 and G40. IMP contacts are provided by residues D13–K16, N38–H41, T128, R142, Q223, T238, and R302. The Proton donor role is filled by H41. Position 298-304 (T298–R304) interacts with substrate. GTP contacts are provided by residues R304, K330–D332, and G412–G414.

It belongs to the adenylosuccinate synthetase family. In terms of assembly, homodimer. Mg(2+) is required as a cofactor.

Its subcellular location is the cytoplasm. The enzyme catalyses IMP + L-aspartate + GTP = N(6)-(1,2-dicarboxyethyl)-AMP + GDP + phosphate + 2 H(+). It participates in purine metabolism; AMP biosynthesis via de novo pathway; AMP from IMP: step 1/2. Functionally, plays an important role in the de novo pathway of purine nucleotide biosynthesis. Catalyzes the first committed step in the biosynthesis of AMP from IMP. This is Adenylosuccinate synthetase from Leifsonia xyli subsp. xyli (strain CTCB07).